Reading from the N-terminus, the 203-residue chain is Ras-related protein Rab-13 (203 aa).

7 residues coordinate GTP: S17, G18, G20, K21, T22, C23, and T40. T22 serves as a coordination point for Mg(2+). A Switch 1 motif is present at residues 31–45; the sequence is DNFNSTYISTIGIDF. T40 is a Mg(2+) binding site. Glycyl lysine isopeptide (Lys-Gly) (interchain with G-Cter in ubiquitin) cross-links involve residues K46 and K58. D63 is a Mg(2+) binding site. The Switch 2 motif lies at 63-80; sequence DTAGQERFKTITTAYYRG. GTP contacts are provided by G66, N121, K122, D124, A152, and K153. Positions 173–203 are disordered; sequence TGGRRSGNSSKPSSTDLKVSDKKNSNKCSLG. Phosphoserine is present on S178. A compositionally biased stretch (polar residues) spans 178-189; sequence SGNSSKPSSTDL. At C200 the chain carries Cysteine methyl ester. C200 is lipidated: S-geranylgeranyl cysteine. The propeptide at 201–203 is removed in mature form; sequence SLG.

The protein belongs to the small GTPase superfamily. Rab family. Interacts (GTP-bound form) with MICALL2; competes with RAB8A and is involved in tight junctions assembly. Interacts (GTP-bound form) with MICALL1. Interacts (GTP-bound form) with MICAL1, MICAL3, MICALCL, EHBP1 and EHBP1L1; ternary complexes of RAB8A, RAB13 and either MICAL1 or EHBP1L1 are possible. Interacts with PRKACA; downstream effector of RAB13 involved in tight junction assembly. Interacts with GRB2; may recruit RAB13 to the leading edge of migrating endothelial cells where it can activate RHOA. Interacts (isoprenylated form) with PDE6D; dissociates RAB13 from membranes. Interacts with BICDL2/BICDR2. Interacts with LEPROT and LEPROTL1. Mg(2+) serves as cofactor. Post-translationally, ubiquitinated via 'Lys-11'-linked ubiquitination on Lys-46 and Lys-58; impairing the recruitment of guanosine diphosphate (GDP) dissociation inhibitor 1/GDI1. As to expression, highest levels found in lung, kidney, whole brain and spinal cord. Expressed in all tissues tested including Sertoli and germ cells (at protein level). Also detected in osteoclasts.

The protein resides in the cell membrane. Its subcellular location is the cytoplasmic vesicle membrane. It localises to the cell junction. It is found in the tight junction. The protein localises to the golgi apparatus. The protein resides in the trans-Golgi network membrane. Its subcellular location is the recycling endosome membrane. It localises to the cell projection. It is found in the lamellipodium. It carries out the reaction GTP + H2O = GDP + phosphate + H(+). Regulated by guanine nucleotide exchange factors (GEFs) including DENND1C, which promote the exchange of bound GDP for free GTP. Regulated by GTPase activating proteins (GAPs) which increase the GTP hydrolysis activity. Inhibited by GDP dissociation inhibitors (GDIs). Activated in response to insulin. In terms of biological role, the small GTPases Rab are key regulators of intracellular membrane trafficking, from the formation of transport vesicles to their fusion with membranes. Rabs cycle between an inactive GDP-bound form and an active GTP-bound form that is able to recruit to membranes different sets of downstream effectors directly responsible for vesicle formation, movement, tethering and fusion. RAB13 is involved in endocytic recycling and regulates the transport to the plasma membrane of transmembrane proteins like the tight junction protein OCLN/occludin. Thereby, it regulates the assembly and the activity of tight junctions. Moreover, it may also regulate tight junction assembly by activating the PKA signaling pathway and by reorganizing the actin cytoskeleton through the activation of the downstream effectors PRKACA and MICALL2 respectively. Through its role in tight junction assembly, may play a role in the establishment of Sertoli cell barrier. Plays also a role in angiogenesis through regulation of endothelial cells chemotaxis. Also involved in neurite outgrowth. Has also been proposed to play a role in post-Golgi membrane trafficking from the TGN to the recycling endosome. Finally, it has been involved in insulin-induced transport to the plasma membrane of the glucose transporter GLUT4 and therefore may play a role in glucose homeostasis. This is Ras-related protein Rab-13 from Rattus norvegicus (Rat).